The primary structure comprises 681 residues: DNA-directed RNA polymerase subunit beta' (681 aa).

Cys-69, Cys-71, Cys-87, and Cys-90 together coordinate Zn(2+). Asp-489, Asp-491, and Asp-493 together coordinate Mg(2+).

Belongs to the RNA polymerase beta' chain family. RpoC1 subfamily. As to quaternary structure, in plastids the minimal PEP RNA polymerase catalytic core is composed of four subunits: alpha, beta, beta', and beta''. When a (nuclear-encoded) sigma factor is associated with the core the holoenzyme is formed, which can initiate transcription. The cofactor is Mg(2+). Zn(2+) is required as a cofactor.

The protein resides in the plastid. The protein localises to the chloroplast. It carries out the reaction RNA(n) + a ribonucleoside 5'-triphosphate = RNA(n+1) + diphosphate. In terms of biological role, DNA-dependent RNA polymerase catalyzes the transcription of DNA into RNA using the four ribonucleoside triphosphates as substrates. In Nicotiana sylvestris (Wood tobacco), this protein is DNA-directed RNA polymerase subunit beta'.